Reading from the N-terminus, the 294-residue chain is Cytidine deaminase (294 aa).

CMP/dCMP-type deaminase domains are found at residues 48–168 and 186–294; these read DEDA…FGPK and LTGD…VLLA. 89-91 is a binding site for substrate; it reads NME. Histidine 102 contacts Zn(2+). Glutamate 104 (proton donor) is an active-site residue. The Zn(2+) site is built by cysteine 129 and cysteine 132.

This sequence belongs to the cytidine and deoxycytidylate deaminase family. As to quaternary structure, homodimer. Zn(2+) is required as a cofactor.

The enzyme catalyses cytidine + H2O + H(+) = uridine + NH4(+). The catalysed reaction is 2'-deoxycytidine + H2O + H(+) = 2'-deoxyuridine + NH4(+). Its function is as follows. This enzyme scavenges exogenous and endogenous cytidine and 2'-deoxycytidine for UMP synthesis. This Escherichia coli O157:H7 protein is Cytidine deaminase.